Here is a 289-residue protein sequence, read N- to C-terminus: Probable ABC transporter permease protein BruAb2_0483 (289 aa).

6 helical membrane-spanning segments follow: residues 9 to 29 (FLILPSLLLAAVVIFWPVVHL), 70 to 90 (VWTVAVVGGALVLSIPVAIIL), 99 to 119 (VARVIIMLPWAVSLTMTAIFW), 144 to 166 (IQWLASAATAFPMQILVGILVTV), 213 to 233 (IAIVLNTIYVFNSFPIIWVMT), and 258 to 278 (FGEASAVSLIMLAILLVFTVI). The 215-residue stretch at 65 to 279 (LWRTAVWTVA…AILLVFTVIY (215 aa)) folds into the ABC transmembrane type-1 domain.

Belongs to the binding-protein-dependent transport system permease family. The complex is composed of two ATP-binding proteins (BruAb2_0487), two transmembrane proteins (BruAb2_0483) and a solute-binding protein (BruAb2_0484).

It is found in the cell inner membrane. Probably part of an ABC transporter complex. Probably responsible for the translocation of the substrate across the membrane. In Brucella abortus biovar 1 (strain 9-941), this protein is Probable ABC transporter permease protein BruAb2_0483.